The primary structure comprises 501 residues: GTPase Obg (501 aa).

The 158-residue stretch at 2-159 (NRFIDRVVLH…HDLILELKSM (158 aa)) folds into the Obg domain. The region spanning 160 to 341 (ADVGLVGFPS…LKYKLLEIVQ (182 aa)) is the OBG-type G domain. Residues 166 to 173 (GFPSAGKS), 191 to 195 (FTTLQ), 212 to 215 (DVPG), 292 to 295 (NKAD), and 322 to 324 (SAV) each bind GTP. Mg(2+)-binding residues include serine 173 and threonine 193. An OCT domain is found at 362–442 (VDHRTKGQFQ…IGGISFEWEP (81 aa)).

It belongs to the TRAFAC class OBG-HflX-like GTPase superfamily. OBG GTPase family. In terms of assembly, monomer. Mg(2+) serves as cofactor.

Its subcellular location is the cytoplasm. In terms of biological role, an essential GTPase which binds GTP, GDP and possibly (p)ppGpp with moderate affinity, with high nucleotide exchange rates and a fairly low GTP hydrolysis rate. Plays a role in control of the cell cycle, stress response, ribosome biogenesis and in those bacteria that undergo differentiation, in morphogenesis control. The chain is GTPase Obg from Corynebacterium glutamicum (strain R).